Here is a 794-residue protein sequence, read N- to C-terminus: MDFPQHSQRVLEQLNQQRQLGLLCDCTFVVDGVDFKAHKAVLAACSEYFKMLFVDQKDVVHLDISNAAGLGQVLEFMYTAKLSLSPENVDDVLAVASFLQMQDIVTACHTLKSLAEPSSTTGESADASAVEGGDKRAKDEKAAATMLSRLDQARGSSSTGPGRELKEERGGQAESASSGAEQTEKADAPREPPPVELKPDPTSSMAAAEAEALSESSEQEMEVEPASKGEDGQEEEGAGPATVKEEGMHLDNGEPPEENEESAGTDSGQELGMEGQNLRSGTYGDRTESKAYGSIIHKCEDCGKEFTHTGNFKRHIRIHTGEKPFSCRECSKAFSDPAACKAHEKTHSPLKPYGCEECGKSYRLISLLNLHKKRHSGEARYRCGDCGKLFTTSGNLKRHQLVHSGQKPYQCDYCGRSFSDPTSKMRHLETHDTDKEHKCPHCDKKFNQVGNLKAHLKIHIADGPLKCRECGKQFTTSGNLKRHLRIHSGEKPYVCTHCQRQFADPGALQRHVRIHTGEKPCQCVICGKAFTQASSLIAHVRQHTGEKPYVCERCGKRFVQSSQLANHIRHHDNIRPHKCSVCSKAFVNVGDLSKHIIIHTGEKPYLCDKCGRGFNRVDNLRSHVKTVHQGKAGIKILEPEEGGEVSVVTVDDMVTLATEALAATAVTQLTVVPVGAAVTADETEVLKAEISKAVKQVQEEDPNTHILYACDSCGDKFLDANSLAQHVRIHTAQALVMFQTDADFYQQYGPGSTWPAGQMLQAGELVFRPRDGTEGQPTLAESPPTAPDCLPPAE.

Residues 1–104 (MDFPQHSQRV…VASFLQMQDI (104 aa)) enclose the BTB domain. A disordered region spans residues 116–285 (EPSSTTGESA…QNLRSGTYGD (170 aa)). Residues 132–142 (GGDKRAKDEKA) show a composition bias toward basic and acidic residues. The segment covering 203 to 216 (SSMAAAEAEALSES) has biased composition (low complexity). Residues 243-252 (VKEEGMHLDN) are compositionally biased toward basic and acidic residues. The segment covering 254 to 263 (EPPEENEESA) has biased composition (acidic residues). An interaction with MYC region spans residues 260-299 (EESAGTDSGQELGMEGQNLRSGTYGDRTESKAYGSIIHKC). C2H2-type zinc fingers lie at residues 297–319 (HKCE…IRIH), 325–347 (FSCR…EKTH), 353–375 (YGCE…KKRH), 381–403 (YRCG…QLVH), 409–431 (YQCD…LETH), 437–459 (HKCP…LKIH), 465–487 (LKCR…LRIH), 493–515 (YVCT…VRIH), 519–543 (KPCQ…VRQH), 549–571 (YVCE…IRHH), 577–599 (HKCS…IIIH), 605–628 (YLCD…KTVH), and 708–730 (YACD…VRIH). Residue K388 forms a Glycyl lysine isopeptide (Lys-Gly) (interchain with G-Cter in ubiquitin) linkage. K472 is covalently cross-linked (Glycyl lysine isopeptide (Lys-Gly) (interchain with G-Cter in ubiquitin)). Residues 628 to 709 (HQGKAGIKIL…EDPNTHILYA (82 aa)) form an interaction with MYC region. An interaction with HCFC1 region spans residues 628-794 (HQGKAGIKIL…TAPDCLPPAE (167 aa)). Positions 769-794 (PRDGTEGQPTLAESPPTAPDCLPPAE) are disordered. Residues 784-794 (PTAPDCLPPAE) are compositionally biased toward pro residues.

It belongs to the krueppel C2H2-type zinc-finger protein family. As to quaternary structure, homooligomerizes (via the BTB/POZ domain), multimerization is required for DNA binding. Binds to the C-terminal helix-loop-helix motif of MYC which inhibits ZBTB17 transactivation and growth arrest activities and renders it insoluble in the nucleus. Also interacts with HCFC1, MAGEA4 and TMPRSS11A. Interacts (via the C-terminal zinc fingers) with GFI1; the interaction results in the recruitment of MYC to the CDKN1A/p21 and CDKN1B promoters and repression of transcription. Interacts with TRAF2, interfering with the binding of UBC13 to TRAF2, and inhibiting TRAF2 E3 ligase activity. Interacts with BCL6; the interaction inhibits ZBTB17 transactivation activity on target genes involved in cell cycle arrest. Interacts with ZBTB49; this interaction blocks ZBTB17-mediated repression of RB1. Undergoes 'Lys-48'-linked polyubiquitination at Lys-388 and Lys-472 and subsequent proteasomal degradation in a TRAF2-dependent manner and upon TNFA stimulation. As to expression, found in all the embryonic and adult tissues examined.

It localises to the nucleus. Functionally, transcription factor that can function as an activator or repressor depending on its binding partners, and by targeting negative regulators of cell cycle progression. Has been shown to bind to the promoters of adenovirus major late protein and cyclin D1 and activate transcription. Required for early embryonic development during gastrulation. Plays a critical role in early lymphocyte development, where it is essential to prevent apoptosis in lymphoid precursors, allowing them to survive in response to IL7 and undergo proper lineage commitment. Represses RB1 transcription; this repression can be blocked by interaction with ZBTB49. This chain is Zinc finger and BTB domain-containing protein 17 (Zbtb17), found in Mus musculus (Mouse).